Reading from the N-terminus, the 64-residue chain is Alpha-conotoxin CnIA (64 aa).

Positions 1–21 are cleaved as a signal peptide; that stretch reads MGMRMMFTVFLLVVLTTTVVS. The propeptide occupies 22 to 47; sequence FPSDSASDGRDDEAKDERSDIYESKR. Disulfide bonds link Cys51–Cys56 and Cys52–Cys62. A 4-hydroxyproline; in CnIK; partial modification is found at Pro54. Cys62 carries the post-translational modification Cysteine amide.

This sequence belongs to the conotoxin A superfamily. As to expression, expressed by the venom duct.

Its subcellular location is the secreted. Alpha-conotoxins act on postsynaptic membranes, they bind to the nicotinic acetylcholine receptors (nAChR) and thus inhibit them. CnIA and CnIB block muscular nAChR alpha-1/gamma and alpha-1/delta subunits. This chain is Alpha-conotoxin CnIA, found in Conus consors (Singed cone).